A 513-amino-acid chain; its full sequence is Tryptophan--tRNA ligase 1 (513 aa).

The 'HIGH' region signature appears at 86–94; the sequence is PTGDPHIGH. Residues 393–397 carry the 'KMSKS' region motif; it reads KMSSS.

It belongs to the class-I aminoacyl-tRNA synthetase family.

It is found in the cytoplasm. It carries out the reaction tRNA(Trp) + L-tryptophan + ATP = L-tryptophyl-tRNA(Trp) + AMP + diphosphate + H(+). The protein is Tryptophan--tRNA ligase 1 of Halobacterium salinarum (strain ATCC 700922 / JCM 11081 / NRC-1) (Halobacterium halobium).